The primary structure comprises 234 residues: Small ribosomal subunit protein uS2c (234 aa).

This sequence belongs to the universal ribosomal protein uS2 family.

The protein resides in the plastid. Its subcellular location is the chloroplast. The sequence is that of Small ribosomal subunit protein uS2c (rps2) from Pinus thunbergii (Japanese black pine).